Here is a 133-residue protein sequence, read N- to C-terminus: Large ribosomal subunit protein eL19 (133 aa).

The disordered stretch occupies residues 55 to 83 (RGISGARKKPRRKGPGSRKGGKYSKLPRK). Over residues 60 to 83 (ARKKPRRKGPGSRKGGKYSKLPRK) the composition is skewed to basic residues.

Belongs to the eukaryotic ribosomal protein eL19 family. As to quaternary structure, part of the 50S ribosomal subunit.

Its function is as follows. Binds to the 23S rRNA. The polypeptide is Large ribosomal subunit protein eL19 (Korarchaeum cryptofilum (strain OPF8)).